The sequence spans 236 residues: Lipoarabinomannan carrier protein LprG (236 aa).

The signal sequence occupies residues 1–26 (MRTPRRHCRRIAVLAAVSIAATVVAG). Cysteine 27 carries N-palmitoyl cysteine lipidation. A lipid anchor (S-diacylglycerol cysteine) is attached at cysteine 27.

Belongs to the LppX/LprAFG lipoprotein family. In terms of processing, modified by Lgt on Cys-27 with an S-linked diacylglyceral, signal peptide is removed by LspA, Cys-27 is further modifed with a fatty acid on its amino group by Lnt yielding a triacylated protein.

The protein localises to the cell inner membrane. The protein resides in the secreted. It is found in the cell wall. In terms of biological role, helps membrane protein Mb1445c (P55) transport triacylglycerides (TAG) across the inner cell membrane into the periplasm and probably ultimately to the outer membrane. Binds TAG in its hydrophobic cavity and transfers it between lipid bilayers. TAG probably regulates lipid metabolism and growth regulation and plays a structural role in the outer membrane. Binds di- and triacylated phosphatidyl-myo-inositol mannosides (PIMs), and glycolipid lipoglycan modulins lipoarabinomannan (LAM) and lipomannan (LM), facilitating their recognition by TLR2. Required for activity of drug efflux transporter Mb1445c. Required, probably with Mb1445c, for normal surface localization of LAM. Its function is as follows. Constitutes a host TLR2 agonist (toll-like receptor). This Mycobacterium bovis (strain ATCC BAA-935 / AF2122/97) protein is Lipoarabinomannan carrier protein LprG.